The sequence spans 344 residues: UDP-3-O-acylglucosamine N-acyltransferase (344 aa).

His-248 (proton acceptor) is an active-site residue.

This sequence belongs to the transferase hexapeptide repeat family. LpxD subfamily. As to quaternary structure, homotrimer.

It carries out the reaction a UDP-3-O-[(3R)-3-hydroxyacyl]-alpha-D-glucosamine + a (3R)-hydroxyacyl-[ACP] = a UDP-2-N,3-O-bis[(3R)-3-hydroxyacyl]-alpha-D-glucosamine + holo-[ACP] + H(+). It functions in the pathway bacterial outer membrane biogenesis; LPS lipid A biosynthesis. In terms of biological role, catalyzes the N-acylation of UDP-3-O-acylglucosamine using 3-hydroxyacyl-ACP as the acyl donor. Is involved in the biosynthesis of lipid A, a phosphorylated glycolipid that anchors the lipopolysaccharide to the outer membrane of the cell. The polypeptide is UDP-3-O-acylglucosamine N-acyltransferase (Synechocystis sp. (strain ATCC 27184 / PCC 6803 / Kazusa)).